A 138-amino-acid polypeptide reads, in one-letter code: uncharacterized protein (138 aa).

A signal peptide spans 1–35 (MVAPAARVFLRAVRAALTSTVPDLLCLLARGSPRG).

In terms of tissue distribution, isoform 1 is highly expressed in small intestine, testis and kidney, medium expressed in brain and heart and low expressed in colon; it could not be detected in liver, adrenal gland and pancreas.

It localises to the secreted. This is an uncharacterized protein from Homo sapiens (Human).